A 380-amino-acid polypeptide reads, in one-letter code: Cytochrome b (380 aa).

The next 4 helical transmembrane spans lie at 33-53 (FGSLLGACLIIQITTGLFLAM), 77-98 (WMIRHLHANGASMFFICLFLHI), 113-133 (WNIGIILLFTTMMTAFMGYVL), and 178-198 (FFTLHFMLPFIITALTTLHLL). Residues H83 and H97 each contribute to the heme b site. 2 residues coordinate heme b: H182 and H196. H201 provides a ligand contact to a ubiquinone. A run of 4 helical transmembrane segments spans residues 226 to 246 (IKDILGLLLFLLALMTLTLLS), 288 to 308 (LGGVMALMLSILILTTIPALH), 320 to 340 (LSQFLYWLLIADLLILTWIGG), and 347 to 367 (FITISQVASTLYFTTILLLMP).

The protein belongs to the cytochrome b family. As to quaternary structure, the cytochrome bc1 complex contains 11 subunits: 3 respiratory subunits (MT-CYB, CYC1 and UQCRFS1), 2 core proteins (UQCRC1 and UQCRC2) and 6 low-molecular weight proteins (UQCRH/QCR6, UQCRB/QCR7, UQCRQ/QCR8, UQCR10/QCR9, UQCR11/QCR10 and a cleavage product of UQCRFS1). This cytochrome bc1 complex then forms a dimer. The cofactor is heme b.

The protein resides in the mitochondrion inner membrane. In terms of biological role, component of the ubiquinol-cytochrome c reductase complex (complex III or cytochrome b-c1 complex) that is part of the mitochondrial respiratory chain. The b-c1 complex mediates electron transfer from ubiquinol to cytochrome c. Contributes to the generation of a proton gradient across the mitochondrial membrane that is then used for ATP synthesis. This is Cytochrome b (MT-CYB) from Pongo abelii (Sumatran orangutan).